Reading from the N-terminus, the 148-residue chain is Protein PLANT CADMIUM RESISTANCE 9 (148 aa).

The chain crosses the membrane as a helical span at residues 59–78; that stretch reads LAGLMVVAMSSIGCGWYYAS.

The protein belongs to the cornifelin family.

The protein resides in the membrane. In terms of biological role, may be involved in cadmium resistance. The protein is Protein PLANT CADMIUM RESISTANCE 9 (PCR9) of Arabidopsis thaliana (Mouse-ear cress).